The primary structure comprises 726 residues: Replication restart protein PriA (726 aa).

Ile234 contacts ATP. Positions Ile234–Leu373 constitute a Helicase ATP-binding domain. Positions Leu316–His319 match the DEAH box motif. The Zn(2+) site is built by Cys431, Cys434, Cys440, Cys443, Cys458, Cys461, Cys471, and Cys474.

It belongs to the helicase family. PriA subfamily. As to quaternary structure, component of the replication restart primosome. The cofactor is Zn(2+).

The enzyme catalyses Couples ATP hydrolysis with the unwinding of duplex DNA by translocating in the 3'-5' direction.. It catalyses the reaction ATP + H2O = ADP + phosphate + H(+). In terms of biological role, initiates the restart of stalled replication forks, which reloads the replicative helicase on sites other than the origin of replication. Recognizes and binds to abandoned replication forks and remodels them to uncover a helicase loading site. Promotes assembly of the primosome at these replication forks. In Buchnera aphidicola subsp. Acyrthosiphon pisum (strain APS) (Acyrthosiphon pisum symbiotic bacterium), this protein is Replication restart protein PriA.